The chain runs to 112 residues: Probable 4-amino-4-deoxy-L-arabinose-phosphoundecaprenol flippase subunit ArnE (112 aa).

Residues 35–110 (RHILFWLGMA…IVVGIVILGT (76 aa)) enclose the EamA domain. 3 helical membrane passes run 37-57 (ILFW…LWLS), 66-86 (IAYP…WGIW), and 89-109 (PVAR…VILG).

This sequence belongs to the ArnE family. As to quaternary structure, heterodimer of ArnE and ArnF.

The protein localises to the cell inner membrane. It functions in the pathway bacterial outer membrane biogenesis; lipopolysaccharide biosynthesis. Its function is as follows. Translocates 4-amino-4-deoxy-L-arabinose-phosphoundecaprenol (alpha-L-Ara4N-phosphoundecaprenol) from the cytoplasmic to the periplasmic side of the inner membrane. This chain is Probable 4-amino-4-deoxy-L-arabinose-phosphoundecaprenol flippase subunit ArnE, found in Klebsiella pneumoniae (strain 342).